A 504-amino-acid polypeptide reads, in one-letter code: Zinc finger protein AEBP2 (504 aa).

The segment at 1–219 (MAAALADMAD…SRMDSEDSIS (219 aa)) is disordered. The residue at position 2 (Ala2) is an N-acetylalanine. Low complexity predominate over residues 16–30 (RLSPLSPGSPGPAAR). 3 positions are modified to phosphoserine: Ser18, Ser21, and Ser24. The segment covering 36 to 49 (PEEEEEEDDEEAEA) has biased composition (acidic residues). The segment covering 59–69 (GGAGGGAGGGE) has biased composition (gly residues). A compositionally biased stretch (acidic residues) spans 86–110 (GDEDEDEEDDEDEGSSSGGAEEESS). Residues 129–140 (SLSPGAASSSSG) are compositionally biased toward low complexity. Position 131 is a phosphoserine (Ser131). A compositionally biased stretch (basic and acidic residues) spans 142–153 (GDGKEGLEEPKG). Gly residues-rich tracts occupy residues 154 to 168 (PRGG…GGGS) and 178 to 189 (GDEGYGTGGGGS). A phosphoserine mark is found at Ser199, Ser203, and Ser204. The interval 202 to 287 (MSSDGEPLSR…IHVDGQRGGV (86 aa)) is interaction with RBBP4. Residues 254 to 279 (YNCCWDQCQACFNSSPDLADHIRSIH) form a C2H2-type 1 zinc finger. The segment at 293-315 (KGCKVYNTPSTSQSWLQRHMLTH) adopts a C2H2-type 2; degenerate zinc-finger fold. The segment at 321–345 (FKCVVGGCNASFASQGGLARHVPTH) adopts a C2H2-type 3 zinc-finger fold. Over residues 345 to 358 (HFSQQNSSKVSSQP) the composition is skewed to polar residues. The disordered stretch occupies residues 345-387 (HFSQQNSSKVSSQPKAKEESPSKAGMNKRRKLKNKRRRSLPRP). Residues 370 to 385 (MNKRRKLKNKRRRSLP) show a composition bias toward basic residues. Ser383 bears the Phosphoserine mark. The tract at residues 400–471 (RHRAICFNLS…QLKTKVVHLS (72 aa)) is interaction with SUZ12. Positions 488 to 504 (TMPQKRLKRFDILNFPR) are important for nucleosome binding activity of the PRC2 complex.

Belongs to the AEBP2/jing C2H2-type zinc-finger family. Self-associates. Associates with the PRC2 complex, which consists of the core components EED, EZH1 or EZH2, SUZ12, and RBBP4, and various combinations of accessory subunits including AEBP2, JARID2, PHF19, MTF2 and EPOP. Found in a monomeric PRC2.2 (class 2) complex consisting of at least SUZ12, RBBP4, AEBP2 and JARID2. Within the PRC2 complex, interacts directly with SUZ12; competes with PHF19 for SUZ12 binding. Interacts with EED, EZH2, and RBBP4. May also interact with RBBP7. Expressed in brain, brown adipose tissue, white adipose tissue, heart, kidney, lung, skeletal muscle, small intestine and spleen. Expressed at low levels in liver.

It is found in the nucleus. Acts as an accessory subunit for the core Polycomb repressive complex 2 (PRC2), which mediates histone H3K27 (H3K27me3) trimethylation on chromatin leading to transcriptional repression of the affected target gene. Plays a role in nucleosome localization of the PRC2 complex. This is Zinc finger protein AEBP2 (Aebp2) from Mus musculus (Mouse).